A 183-amino-acid chain; its full sequence is Inner membrane-spanning protein YciB (183 aa).

5 helical membrane passes run L10–I30, M50–D70, A72–S92, V118–F138, and F148–L168.

Belongs to the YciB family.

Its subcellular location is the cell inner membrane. In terms of biological role, plays a role in cell envelope biogenesis, maintenance of cell envelope integrity and membrane homeostasis. The sequence is that of Inner membrane-spanning protein YciB from Shewanella sediminis (strain HAW-EB3).